The chain runs to 88 residues: Small ribosomal subunit protein uS17 (88 aa).

The protein belongs to the universal ribosomal protein uS17 family. As to quaternary structure, part of the 30S ribosomal subunit.

In terms of biological role, one of the primary rRNA binding proteins, it binds specifically to the 5'-end of 16S ribosomal RNA. This Nitratidesulfovibrio vulgaris (strain DSM 19637 / Miyazaki F) (Desulfovibrio vulgaris) protein is Small ribosomal subunit protein uS17.